The following is a 331-amino-acid chain: Vitamin B12 import system permease protein BtuC (331 aa).

9 helical membrane-spanning segments follow: residues 20-42, 62-84, 91-113, 117-136, 148-170, 190-209, 240-262, 277-296, and 303-325; these read VMLAVLLVLSALYLMVGEVFLSP, LVAAMVIGAALAVSGATLQVLLG, GVLGISGGASLAMVIALFLLPVM, TVFMLAAIIGALVFTLILVG, MLLVGVALGILSGAFVTWAFYFS, SWHHHLVTLVLLPVLVWLCL, LAISILIGCAVALGGIISFVGLV, FLLPLSAFAGATLLVFSDIW, and SAELPLGVMTTTIGAPIFIWMLI.

The protein belongs to the binding-protein-dependent transport system permease family. FecCD subfamily. The complex is composed of two ATP-binding proteins (BtuD), two transmembrane proteins (BtuC) and a solute-binding protein (BtuF).

It is found in the cell inner membrane. In terms of biological role, part of the ABC transporter complex BtuCDF involved in vitamin B12 import. Involved in the translocation of the substrate across the membrane. This Vibrio vulnificus (strain CMCP6) protein is Vitamin B12 import system permease protein BtuC.